Here is a 254-residue protein sequence, read N- to C-terminus: tRNA pseudouridine synthase A (254 aa).

The active-site Nucleophile is aspartate 52. Tyrosine 111 lines the substrate pocket.

It belongs to the tRNA pseudouridine synthase TruA family. In terms of assembly, homodimer.

It carries out the reaction uridine(38/39/40) in tRNA = pseudouridine(38/39/40) in tRNA. In terms of biological role, formation of pseudouridine at positions 38, 39 and 40 in the anticodon stem and loop of transfer RNAs. The chain is tRNA pseudouridine synthase A from Rhizorhabdus wittichii (strain DSM 6014 / CCUG 31198 / JCM 15750 / NBRC 105917 / EY 4224 / RW1) (Sphingomonas wittichii).